Reading from the N-terminus, the 196-residue chain is Transcriptional regulatory protein UhpA (196 aa).

The Response regulatory domain occupies 3-116 (TVALIDDHLI…ELIAAVHTVA (114 aa)). 4-aspartylphosphate is present on D54. The HTH luxR-type domain maps to 131 to 196 (AAGRQDPLTK…ELAHRMFDGW (66 aa)). The H-T-H motif DNA-binding region spans 155–174 (VKEIAAELGLSPKTVHVHRA).

Phosphorylated and dephosphorylated by UhpB.

It is found in the cytoplasm. Part of the UhpABC signaling cascade that controls the expression of the hexose phosphate transporter UhpT. Activates the transcription of the uhpT gene. Acts by binding specifically to the uhpT promoter region. This is Transcriptional regulatory protein UhpA (uhpA) from Salmonella typhimurium (strain LT2 / SGSC1412 / ATCC 700720).